The primary structure comprises 256 residues: Small ribosomal subunit protein uS2 (256 aa).

A coiled-coil region spans residues 104-149 (NFKTISQRVHRLEELEALFASPEIEERPKKEQVRLKHELERLQKYL).

This sequence belongs to the universal ribosomal protein uS2 family. As to quaternary structure, part of the 30S ribosomal subunit. Contacts protein S8.

Functionally, spans the head-body hinge region of the 30S subunit. Is loosely associated with the 30S subunit. This Thermus thermophilus (strain ATCC BAA-163 / DSM 7039 / HB27) protein is Small ribosomal subunit protein uS2 (rpsB).